Here is a 71-residue protein sequence, read N- to C-terminus: Small ribosomal subunit protein bS21 (71 aa).

This sequence belongs to the bacterial ribosomal protein bS21 family.

This chain is Small ribosomal subunit protein bS21, found in Shewanella amazonensis (strain ATCC BAA-1098 / SB2B).